A 215-amino-acid chain; its full sequence is Cytochrome b6 (215 aa).

The helical transmembrane segment at 32 to 52 (IFYCLGGITLTCFLVQVATGF) threads the bilayer. Residue C35 coordinates heme c. Residues H86 and H100 each contribute to the heme b site. Transmembrane regions (helical) follow at residues 90 to 110 (ASMM…TGGF), 116 to 136 (LTWV…VTGY), and 186 to 206 (LHTF…FPMI). Residues H187 and H202 each coordinate heme b.

The protein belongs to the cytochrome b family. PetB subfamily. The 4 large subunits of the cytochrome b6-f complex are cytochrome b6, subunit IV (17 kDa polypeptide, PetD), cytochrome f and the Rieske protein, while the 4 small subunits are PetG, PetL, PetM and PetN. The complex functions as a dimer. Heme b serves as cofactor. It depends on heme c as a cofactor.

It localises to the plastid. The protein localises to the chloroplast thylakoid membrane. In terms of biological role, component of the cytochrome b6-f complex, which mediates electron transfer between photosystem II (PSII) and photosystem I (PSI), cyclic electron flow around PSI, and state transitions. This Populus alba (White poplar) protein is Cytochrome b6.